We begin with the raw amino-acid sequence, 266 residues long: Nuclease (266 aa).

Residues 1-21 form the signal peptide; it reads MRFNNKMLALAALLFAAQASA. Cysteine 30 and cysteine 34 are disulfide-bonded. Residue histidine 110 is the Proton acceptor of the active site. Residue asparagine 140 coordinates Mg(2+). Residues cysteine 222 and cysteine 264 are joined by a disulfide bond.

It belongs to the DNA/RNA non-specific endonuclease family. Homodimer. It depends on Mg(2+) as a cofactor.

The protein localises to the secreted. It carries out the reaction Endonucleolytic cleavage to 5'-phosphomononucleotide and 5'-phosphooligonucleotide end-products.. Catalyzes the hydrolysis of both DNA and RNA, double- or single-stranded, at the 3'position of the phosphodiester bond to produce 5'-phosphorylated mono-, di-, tri- and tetranucleotides. DNA is a slightly better substrate than RNA. The sequence is that of Nuclease (nucA) from Serratia marcescens.